Here is an 805-residue protein sequence, read N- to C-terminus: DNA gyrase subunit B (805 aa).

The Toprim domain maps to 435–550 (SEIFIVEGDS…RGYIYIAQPP (116 aa)). Mg(2+)-binding residues include Glu441, Asp515, and Asp517.

The protein belongs to the type II topoisomerase GyrB family. As to quaternary structure, heterotetramer, composed of two GyrA and two GyrB chains. In the heterotetramer, GyrA contains the active site tyrosine that forms a transient covalent intermediate with DNA, while GyrB binds cofactors and catalyzes ATP hydrolysis. The cofactor is Mg(2+). Mn(2+) serves as cofactor. Requires Ca(2+) as cofactor.

The protein localises to the cytoplasm. The enzyme catalyses ATP-dependent breakage, passage and rejoining of double-stranded DNA.. Functionally, a type II topoisomerase that negatively supercoils closed circular double-stranded (ds) DNA in an ATP-dependent manner to modulate DNA topology and maintain chromosomes in an underwound state. Negative supercoiling favors strand separation, and DNA replication, transcription, recombination and repair, all of which involve strand separation. Also able to catalyze the interconversion of other topological isomers of dsDNA rings, including catenanes and knotted rings. Type II topoisomerases break and join 2 DNA strands simultaneously in an ATP-dependent manner. The chain is DNA gyrase subunit B from Caulobacter vibrioides (strain ATCC 19089 / CIP 103742 / CB 15) (Caulobacter crescentus).